The sequence spans 349 residues: tRNA N6-adenosine threonylcarbamoyltransferase (349 aa).

2 residues coordinate Fe cation: H111 and H115. Substrate is bound by residues 134-138 (LVSGG), D167, G180, D184, and N279. D307 lines the Fe cation pocket.

It belongs to the KAE1 / TsaD family. Requires Fe(2+) as cofactor.

The protein resides in the cytoplasm. It carries out the reaction L-threonylcarbamoyladenylate + adenosine(37) in tRNA = N(6)-L-threonylcarbamoyladenosine(37) in tRNA + AMP + H(+). Functionally, required for the formation of a threonylcarbamoyl group on adenosine at position 37 (t(6)A37) in tRNAs that read codons beginning with adenine. Is involved in the transfer of the threonylcarbamoyl moiety of threonylcarbamoyl-AMP (TC-AMP) to the N6 group of A37, together with TsaE and TsaB. TsaD likely plays a direct catalytic role in this reaction. This chain is tRNA N6-adenosine threonylcarbamoyltransferase, found in Nostoc punctiforme (strain ATCC 29133 / PCC 73102).